The sequence spans 379 residues: 3-dehydroquinate synthase (379 aa).

NAD(+) is bound by residues 67-72, 101-105, 125-126, lysine 138, and lysine 147; these read PGEKNK, GIILD, and TT. Zn(2+) contacts are provided by glutamate 180, histidine 242, and histidine 258.

It belongs to the sugar phosphate cyclases superfamily. Dehydroquinate synthase family. NAD(+) serves as cofactor. The cofactor is Co(2+). It depends on Zn(2+) as a cofactor.

Its subcellular location is the cytoplasm. The enzyme catalyses 7-phospho-2-dehydro-3-deoxy-D-arabino-heptonate = 3-dehydroquinate + phosphate. Its pathway is metabolic intermediate biosynthesis; chorismate biosynthesis; chorismate from D-erythrose 4-phosphate and phosphoenolpyruvate: step 2/7. Its function is as follows. Catalyzes the conversion of 3-deoxy-D-arabino-heptulosonate 7-phosphate (DAHP) to dehydroquinate (DHQ). This Chlamydia caviae (strain ATCC VR-813 / DSM 19441 / 03DC25 / GPIC) (Chlamydophila caviae) protein is 3-dehydroquinate synthase.